A 202-amino-acid polypeptide reads, in one-letter code: ATP-dependent Clp protease proteolytic subunit (202 aa).

Ser-98 acts as the Nucleophile in catalysis. The active site involves His-123.

Belongs to the peptidase S14 family. In terms of assembly, fourteen ClpP subunits assemble into 2 heptameric rings which stack back to back to give a disk-like structure with a central cavity, resembling the structure of eukaryotic proteasomes.

Its subcellular location is the cytoplasm. It catalyses the reaction Hydrolysis of proteins to small peptides in the presence of ATP and magnesium. alpha-casein is the usual test substrate. In the absence of ATP, only oligopeptides shorter than five residues are hydrolyzed (such as succinyl-Leu-Tyr-|-NHMec, and Leu-Tyr-Leu-|-Tyr-Trp, in which cleavage of the -Tyr-|-Leu- and -Tyr-|-Trp bonds also occurs).. Cleaves peptides in various proteins in a process that requires ATP hydrolysis. Has a chymotrypsin-like activity. Plays a major role in the degradation of misfolded proteins. In Desulfovibrio desulfuricans (strain ATCC 27774 / DSM 6949 / MB), this protein is ATP-dependent Clp protease proteolytic subunit.